The primary structure comprises 43 residues: uncharacterized protein (43 aa).

This is an uncharacterized protein from Sinorhizobium fredii (strain NBRC 101917 / NGR234).